The primary structure comprises 164 residues: MKSVITTVISAADAAGRFPTASDLESVQGNIQRASARLEAAEKLAGNYEAVVKEAGDACFAKYAYLKNAGEAGDSQEKINKCYRDVDHYMRLINYCLVVGGTGPVDEWGIAGAREVYRTLNLPTASYVAAFAFARNRLCCPRDMSAQAGVEYAAYLDYVINALS.

C82 and C139 together coordinate (2R,3E)-phycoerythrobilin.

This sequence belongs to the phycobiliprotein family. Heteromer of 6 alpha, 6 beta and one gamma chain. Post-translationally, contains two covalently linked bilin chromophores.

The protein resides in the plastid. It localises to the chloroplast thylakoid membrane. In terms of biological role, light-harvesting photosynthetic bile pigment-protein from the phycobiliprotein complex. The sequence is that of B-phycoerythrin alpha chain (cpeA) from Rhodella violacea (Red alga).